The following is an 83-amino-acid chain: Type 3 secretion system needle filament protein (83 aa).

Belongs to the SctF family. As to quaternary structure, the core secretion machinery of the T3SS is composed of approximately 20 different proteins, including cytoplasmic components, a base, an export apparatus and a needle. This subunit polymerizes and forms the helical needle filament. Interacts with the needle tip protein IpaD/SctA. Interacts with the export apparatus components SpaP/SctR, SpaQ/SctS and SpaR/SctT.

The protein localises to the secreted. Its subcellular location is the cell surface. Functionally, component of the type III secretion system (T3SS), also called injectisome, which is used to inject bacterial effector proteins into eukaryotic host cells. MxiH/SctF forms the external needle filament that protrudes from the bacterial surface. During infection, can induce innate immune responses. The needle proteins interact with host TLR2 or TLR4, and induce signaling by NF-kappa-B and/or AP-1. This activation is MyD88 dependent and results in increased expression of cytokines, including TNF-alpha, IL-6 and IL-8. This chain is Type 3 secretion system needle filament protein, found in Shigella flexneri.